The primary structure comprises 360 residues: POU domain, class 5, transcription factor 1 (360 aa).

2 disordered regions span residues 1–48 (MAGH…SGIG) and 86–137 (PPGG…EESQ). The 9aaTAD signature appears at 4–12 (HLASDFAFS). Ser111 is subject to Phosphoserine; by MAPK. A Glycyl lysine isopeptide (Lys-Gly) (interchain with G-Cter in SUMO) cross-link involves residue Lys123. Basic and acidic residues predominate over residues 123–137 (KLDKEKLEPNPEESQ). The region spanning 138 to 212 (DIKALQKDLE…LLQKWVEEAD (75 aa)) is the POU-specific domain. Arg157 and Gln164 together coordinate DNA. 2 DNA-binding regions span residues 180–186 (SQTTICR) and 193–196 (SFKN). The homeobox DNA-binding region spans 230–289 (RKRKRTSIENRVRGNLESMFLQCPKPTLQQISHIAQQLGLEKDVVRVWFCNRRQKGKRSS). Thr235 is subject to Phosphothreonine. Phosphoserine occurs at positions 236, 289, 290, and 355. Positions 287–322 (RSSSDYSQREDFEAAGSPFTGGPVSSPLAPGPHFGT) are disordered.

It belongs to the POU transcription factor family. Class-5 subfamily. In terms of assembly, interacts with PKM. Interacts with WWP2. Interacts with UBE2I and ZSCAN10. Interacts with PCGF1. Interacts with ESRRB; recruits ESRRB near the POU5F1-SOX2 element in the NANOG proximal promoter; the interaction is DNA independent. Interacts with MAPK8 and MAPK9; the interaction allows MAPK8 and MAPK9 to phosphorylate POU5F1 on Ser-355. Interacts (when phosphorylated on Ser-355) with FBXW8. Interacts with FBXW4. Interacts with SOX2 and SOX15; binds synergistically with either SOX2 or SOX15 to DNA. Interacts with DDX56. Sumoylation enhances the protein stability, DNA binding and transactivation activity. Sumoylation is required for enhanced YES1 expression. Post-translationally, ubiquitinated; undergoes 'Lys-63'-linked polyubiquitination by WWP2 leading to proteasomal degradation. In terms of processing, ERK1/2-mediated phosphorylation at Ser-111 promotes nuclear exclusion and proteasomal degradation. Phosphorylation at Thr-235 and Ser-236 decrease DNA-binding and alters ability to activate transcription. In terms of tissue distribution, expressed in immature oocytes.

Its subcellular location is the cytoplasm. The protein resides in the nucleus. Its function is as follows. Transcription factor that binds to the octamer motif (5'-ATTTGCAT-3'). Forms a trimeric complex with SOX2 or SOX15 on DNA and controls the expression of a number of genes involved in embryonic development such as YES1, FGF4, UTF1 and ZFP206. Critical for early embryogenesis and for embryonic stem cell pluripotency. In Bos taurus (Bovine), this protein is POU domain, class 5, transcription factor 1 (POU5F1).